The following is a 173-amino-acid chain: Propanediol dehydratase small subunit (173 aa).

The protein belongs to the diol/glycerol dehydratase small subunit family. As to quaternary structure, the propanediol dehydratase enzyme is a heterotrimeric complex composed of a large (PduC), a medium (PduD) and a small (PduE) subunit. Adenosylcob(III)alamin is required as a cofactor.

It localises to the bacterial microcompartment. The enzyme catalyses propane-1,2-diol = propanal + H2O. It participates in polyol metabolism; 1,2-propanediol degradation. Inhibited by glycerol. Functionally, part of the PduCDE complex that catalyzes the dehydration of 1,2-propanediol (1,2-PD) to propionaldehyde. Required for S.typhimurium growth on 1,2-PD as the sole carbon and energy source. Localized in the bacterial microcompartment (BMC) dedicated to 1,2-PD degradation. Its function is as follows. The 1,2-PD-specific bacterial microcompartment (BMC) concentrates low levels of 1,2-PD catabolic enzymes, concentrates volatile reaction intermediates thus enhancing pathway flux and keeps the level of toxic, mutagenic propionaldehyde low. The sequence is that of Propanediol dehydratase small subunit from Salmonella typhimurium (strain LT2 / SGSC1412 / ATCC 700720).